Reading from the N-terminus, the 896-residue chain is Translation initiation factor IF-2 (896 aa).

Over residues 93-219 (VKRDPQEAER…RMAEENEKNW (127 aa)) the composition is skewed to basic and acidic residues. A disordered region spans residues 93-307 (VKRDPQEAER…GSALQQGFQK (215 aa)). The span at 256–271 (GRSRSSKAARPAKKGN) shows a compositional bias: basic residues. Basic and acidic residues predominate over residues 272 to 285 (KHAESKADREEARA). Positions 395-564 (PRAPVVTIMG…LLQAEVLELK (170 aa)) constitute a tr-type G domain. The tract at residues 404 to 411 (GHVDHGKT) is G1. GTP is bound at residue 404–411 (GHVDHGKT). Residues 429–433 (GITQH) form a G2 region. Positions 450-453 (DTPG) are G3. Residues 450–454 (DTPGH) and 504–507 (NKID) each bind GTP. A G4 region spans residues 504–507 (NKID). Residues 540-542 (SAK) form a G5 region.

It belongs to the TRAFAC class translation factor GTPase superfamily. Classic translation factor GTPase family. IF-2 subfamily.

Its subcellular location is the cytoplasm. In terms of biological role, one of the essential components for the initiation of protein synthesis. Protects formylmethionyl-tRNA from spontaneous hydrolysis and promotes its binding to the 30S ribosomal subunits. Also involved in the hydrolysis of GTP during the formation of the 70S ribosomal complex. This Klebsiella pneumoniae (strain 342) protein is Translation initiation factor IF-2.